A 256-amino-acid polypeptide reads, in one-letter code: Large ribosomal subunit protein eL8y (256 aa).

Residues 1 to 15 show a composition bias toward basic residues; sequence MAPKKGVKVASKKKP. A disordered region spans residues 1 to 20; sequence MAPKKGVKVASKKKPEKVTN.

The protein belongs to the eukaryotic ribosomal protein eL8 family.

The protein is Large ribosomal subunit protein eL8y (RPL7AB) of Arabidopsis thaliana (Mouse-ear cress).